Reading from the N-terminus, the 356-residue chain is Nicotinate-nucleotide--dimethylbenzimidazole phosphoribosyltransferase (356 aa).

Catalysis depends on glutamate 317, which acts as the Proton acceptor.

This sequence belongs to the CobT family. In terms of assembly, homodimer.

The enzyme catalyses 5,6-dimethylbenzimidazole + nicotinate beta-D-ribonucleotide = alpha-ribazole 5'-phosphate + nicotinate + H(+). It participates in nucleoside biosynthesis; alpha-ribazole biosynthesis; alpha-ribazole from 5,6-dimethylbenzimidazole: step 1/2. Functionally, catalyzes the synthesis of alpha-ribazole-5'-phosphate from nicotinate mononucleotide (NAMN) and 5,6-dimethylbenzimidazole (DMB). The sequence is that of Nicotinate-nucleotide--dimethylbenzimidazole phosphoribosyltransferase from Salmonella gallinarum (strain 287/91 / NCTC 13346).